Consider the following 149-residue polypeptide: D-aminoacyl-tRNA deacylase (149 aa).

The Gly-cisPro motif, important for rejection of L-amino acids signature appears at 141–142; it reads GP.

This sequence belongs to the DTD family. In terms of assembly, homodimer.

Its subcellular location is the cytoplasm. The catalysed reaction is glycyl-tRNA(Ala) + H2O = tRNA(Ala) + glycine + H(+). It catalyses the reaction a D-aminoacyl-tRNA + H2O = a tRNA + a D-alpha-amino acid + H(+). Functionally, an aminoacyl-tRNA editing enzyme that deacylates mischarged D-aminoacyl-tRNAs. Also deacylates mischarged glycyl-tRNA(Ala), protecting cells against glycine mischarging by AlaRS. Acts via tRNA-based rather than protein-based catalysis; rejects L-amino acids rather than detecting D-amino acids in the active site. By recycling D-aminoacyl-tRNA to D-amino acids and free tRNA molecules, this enzyme counteracts the toxicity associated with the formation of D-aminoacyl-tRNA entities in vivo and helps enforce protein L-homochirality. The chain is D-aminoacyl-tRNA deacylase from Streptomyces griseus subsp. griseus (strain JCM 4626 / CBS 651.72 / NBRC 13350 / KCC S-0626 / ISP 5235).